Reading from the N-terminus, the 376-residue chain is Glutamate 5-kinase (376 aa).

Lys-10 serves as a coordination point for ATP. Substrate contacts are provided by Ser-50, Asp-137, and Asn-149. Position 169-170 (169-170 (TD)) interacts with ATP. The 79-residue stretch at 275–353 (RGRLVLDAGA…AEIAGVLGFM (79 aa)) folds into the PUA domain.

This sequence belongs to the glutamate 5-kinase family.

It is found in the cytoplasm. The enzyme catalyses L-glutamate + ATP = L-glutamyl 5-phosphate + ADP. Its pathway is amino-acid biosynthesis; L-proline biosynthesis; L-glutamate 5-semialdehyde from L-glutamate: step 1/2. Functionally, catalyzes the transfer of a phosphate group to glutamate to form L-glutamate 5-phosphate. In Alcanivorax borkumensis (strain ATCC 700651 / DSM 11573 / NCIMB 13689 / SK2), this protein is Glutamate 5-kinase.